A 454-amino-acid chain; its full sequence is Ribosomal protein uS12 methylthiotransferase RimO (454 aa).

In terms of domain architecture, MTTase N-terminal spans 14 to 125 (SKVAFSHVGC…IAKVLDRVEQ (112 aa)). Cys-23, Cys-59, Cys-88, Cys-163, Cys-167, and Cys-170 together coordinate [4Fe-4S] cluster. The Radical SAM core domain maps to 149 to 378 (DKNKFVAYLR…ISVQQNISKD (230 aa)). The TRAM domain occupies 381 to 452 (QTYVGSKMKI…EYDLYGEIIK (72 aa)).

This sequence belongs to the methylthiotransferase family. RimO subfamily. [4Fe-4S] cluster is required as a cofactor.

The protein localises to the cytoplasm. The enzyme catalyses L-aspartate(89)-[ribosomal protein uS12]-hydrogen + (sulfur carrier)-SH + AH2 + 2 S-adenosyl-L-methionine = 3-methylsulfanyl-L-aspartate(89)-[ribosomal protein uS12]-hydrogen + (sulfur carrier)-H + 5'-deoxyadenosine + L-methionine + A + S-adenosyl-L-homocysteine + 2 H(+). Catalyzes the methylthiolation of an aspartic acid residue of ribosomal protein uS12. The polypeptide is Ribosomal protein uS12 methylthiotransferase RimO (Prochlorococcus marinus (strain AS9601)).